A 255-amino-acid polypeptide reads, in one-letter code: Hemin import ATP-binding protein HmuV (255 aa).

Residues Leu2–Glu238 enclose the ABC transporter domain. Residue Gly34–Ser41 coordinates ATP.

Belongs to the ABC transporter superfamily. Heme (hemin) importer (TC 3.A.1.14.5) family. In terms of assembly, the complex is composed of two ATP-binding proteins (HmuV), two transmembrane proteins (HmuU) and a solute-binding protein (HmuT).

The protein resides in the cell inner membrane. Part of the ABC transporter complex HmuTUV involved in hemin import. Responsible for energy coupling to the transport system. This is Hemin import ATP-binding protein HmuV from Pseudomonas fluorescens (strain ATCC BAA-477 / NRRL B-23932 / Pf-5).